The sequence spans 64 residues: Tracheal antimicrobial peptide (64 aa).

Residues 1–26 (MRLHHLLLALLFLVLSAWSGFTQGVG) form the signal peptide. 3 cysteine pairs are disulfide-bonded: C31-C60, C38-C53, and C43-C61.

Belongs to the beta-defensin family. LAP/TAP subfamily. Tracheal epithelium.

It localises to the secreted. In terms of biological role, has antibacterial activity in vitro against Escherichia coli, Staphylococcus aureus, Klebsiella pneumonia, and Pseudomonas aeruginosa. In addition, the peptide is active against Candida albicans, indicating a broad spectrum of activity. This Bos taurus (Bovine) protein is Tracheal antimicrobial peptide.